Reading from the N-terminus, the 376-residue chain is Growth/differentiation factor 8 (376 aa).

The signal sequence occupies residues 1 to 22; it reads MHLSQIVLYLSLLIALGPVVLS. A propeptide spanning residues 23 to 267 is cleaved from the precursor; that stretch reads DQEAHQQPSV…ISEGPRRARR (245 aa). Disulfide bonds link Cys273–Cys283, Cys282–Cys341, Cys310–Cys373, and Cys314–Cys375.

Belongs to the TGF-beta family. Homodimer; disulfide-linked. In terms of tissue distribution, highly expressed in muscle. Also expressed in other tissues such as eye, gill, ovary, gut and brain. Very low level detected in testis. Not expressed in liver, kidney, stomach or heart.

It is found in the secreted. Acts specifically as a negative regulator of skeletal muscle growth. The protein is Growth/differentiation factor 8 of Oreochromis mossambicus (Mozambique tilapia).